The chain runs to 617 residues: Dihydroxy-acid dehydratase (617 aa).

D81 is a binding site for Mg(2+). Residue C122 coordinates [2Fe-2S] cluster. The Mg(2+) site is built by D123 and K124. At K124 the chain carries N6-carboxylysine. [2Fe-2S] cluster is bound at residue C195. E492 contributes to the Mg(2+) binding site. S518 acts as the Proton acceptor in catalysis.

It belongs to the IlvD/Edd family. Homodimer. Requires [2Fe-2S] cluster as cofactor. Mg(2+) is required as a cofactor.

The catalysed reaction is (2R)-2,3-dihydroxy-3-methylbutanoate = 3-methyl-2-oxobutanoate + H2O. It carries out the reaction (2R,3R)-2,3-dihydroxy-3-methylpentanoate = (S)-3-methyl-2-oxopentanoate + H2O. It participates in amino-acid biosynthesis; L-isoleucine biosynthesis; L-isoleucine from 2-oxobutanoate: step 3/4. The protein operates within amino-acid biosynthesis; L-valine biosynthesis; L-valine from pyruvate: step 3/4. Functions in the biosynthesis of branched-chain amino acids. Catalyzes the dehydration of (2R,3R)-2,3-dihydroxy-3-methylpentanoate (2,3-dihydroxy-3-methylvalerate) into 2-oxo-3-methylpentanoate (2-oxo-3-methylvalerate) and of (2R)-2,3-dihydroxy-3-methylbutanoate (2,3-dihydroxyisovalerate) into 2-oxo-3-methylbutanoate (2-oxoisovalerate), the penultimate precursor to L-isoleucine and L-valine, respectively. This chain is Dihydroxy-acid dehydratase, found in Buchnera aphidicola subsp. Cinara cedri (strain Cc).